A 272-amino-acid polypeptide reads, in one-letter code: 2-succinyl-6-hydroxy-2,4-cyclohexadiene-1-carboxylate synthase (272 aa).

Belongs to the AB hydrolase superfamily. MenH family. Monomer.

The enzyme catalyses 5-enolpyruvoyl-6-hydroxy-2-succinyl-cyclohex-3-ene-1-carboxylate = (1R,6R)-6-hydroxy-2-succinyl-cyclohexa-2,4-diene-1-carboxylate + pyruvate. It functions in the pathway quinol/quinone metabolism; 1,4-dihydroxy-2-naphthoate biosynthesis; 1,4-dihydroxy-2-naphthoate from chorismate: step 3/7. The protein operates within quinol/quinone metabolism; menaquinone biosynthesis. Functionally, catalyzes a proton abstraction reaction that results in 2,5-elimination of pyruvate from 2-succinyl-5-enolpyruvyl-6-hydroxy-3-cyclohexene-1-carboxylate (SEPHCHC) and the formation of 2-succinyl-6-hydroxy-2,4-cyclohexadiene-1-carboxylate (SHCHC). This Yersinia pestis bv. Antiqua (strain Nepal516) protein is 2-succinyl-6-hydroxy-2,4-cyclohexadiene-1-carboxylate synthase.